The chain runs to 400 residues: Subtilisin-like protease CPC735_047380 (400 aa).

The first 19 residues, 1–19 (MARINVVVSFLAALAVVQA), serve as a signal peptide directing secretion. A propeptide spanning residues 20–118 (AQLLNLDGQK…IEPQRTFRAF (99 aa)) is cleaved from the precursor. One can recognise an Inhibitor I9 domain in the interval 35–116 (SYVVVMNDGL…NYIEPQRTFR (82 aa)). The 273-residue stretch at 128-400 (SWGLGRISHT…DKLLYNGSGQ (273 aa)) folds into the Peptidase S8 domain. The N-linked (GlcNAc...) asparagine glycan is linked to asparagine 153. Catalysis depends on charge relay system residues aspartate 160 and histidine 191. 2 N-linked (GlcNAc...) asparagine glycosylation sites follow: asparagine 244 and asparagine 252. The active-site Charge relay system is serine 346. A glycan (N-linked (GlcNAc...) asparagine) is linked at asparagine 396.

Belongs to the peptidase S8 family.

It localises to the secreted. Its function is as follows. Secreted subtilisin-like serine protease with keratinolytic activity that contributes to pathogenicity. In Coccidioides posadasii (strain C735) (Valley fever fungus), this protein is Subtilisin-like protease CPC735_047380.